The sequence spans 324 residues: MEEKDSKPSETAAEAQRQPEPSSGGGSGGGSSPSDSDTGRRRALMLPEVLQAPGNHQHPHRITNFFIDNILRPEFGRRKDAGTCCAGAGGARGGEGGAGTTEGGGGGAGGAEQLLGARESRPNPACAPSAGGTLSAAAGDPAVDGEGGSKTLSLHGGAKKPGDPGGSLDGVLKARGLGGGDLSVSSDSDSSQASATLGAQPMLWPAWVYCTRYSDRPSSGPRSRKPKKKNPNKEDKRPRTAFTAEQLQRLKAEFQTNRYLTEQRRQSLAQELSLNESQIKIWFQNKRAKIKKATGNKNTLAVHLMAQGLYNHSTTAKEGKSDSE.

Disordered regions lie at residues 1 to 59, 89 to 174, and 215 to 240; these read MEEK…HQHP, GGAR…VLKA, and DRPS…RPRT. Positions 89–110 are enriched in gly residues; the sequence is GGARGGEGGAGTTEGGGGGAGG. Residues 235–294 constitute a DNA-binding region (homeobox); it reads DKRPRTAFTAEQLQRLKAEFQTNRYLTEQRRQSLAQELSLNESQIKIWFQNKRAKIKKAT.

This sequence belongs to the engrailed homeobox family. In terms of tissue distribution, cerebellar granule cells.

It is found in the nucleus. This is Homeobox protein engrailed-2 (En2) from Mus musculus (Mouse).